The chain runs to 236 residues: Biosynthetic peptidoglycan transglycosylase (236 aa).

Residues 12–31 (ALLWFAAGSIAVVLVLRWVP) form a helical membrane-spanning segment.

Belongs to the glycosyltransferase 51 family.

The protein localises to the cell inner membrane. It carries out the reaction [GlcNAc-(1-&gt;4)-Mur2Ac(oyl-L-Ala-gamma-D-Glu-L-Lys-D-Ala-D-Ala)](n)-di-trans,octa-cis-undecaprenyl diphosphate + beta-D-GlcNAc-(1-&gt;4)-Mur2Ac(oyl-L-Ala-gamma-D-Glu-L-Lys-D-Ala-D-Ala)-di-trans,octa-cis-undecaprenyl diphosphate = [GlcNAc-(1-&gt;4)-Mur2Ac(oyl-L-Ala-gamma-D-Glu-L-Lys-D-Ala-D-Ala)](n+1)-di-trans,octa-cis-undecaprenyl diphosphate + di-trans,octa-cis-undecaprenyl diphosphate + H(+). It participates in cell wall biogenesis; peptidoglycan biosynthesis. Functionally, peptidoglycan polymerase that catalyzes glycan chain elongation from lipid-linked precursors. This is Biosynthetic peptidoglycan transglycosylase from Pseudomonas entomophila (strain L48).